The sequence spans 252 residues: Accessory gland protein Acp32CD (252 aa).

The signal sequence occupies residues 1 to 19 (MWRMRMRLLTGYLVLLALG). The segment at 42-252 (PDGEGGTGVD…GAKEDDYEEM (211 aa)) is disordered. A compositionally biased stretch (gly residues) spans 44–69 (GEGGTGVDGGGGGAGGGAAGPGGGTG). Basic and acidic residues-rich tracts occupy residues 104 to 122 (AIGKKESGGGSDGKSDSKD), 142 to 153 (SDSKDAKDRQDK), 159 to 171 (QEGKRTDHSHHSS), and 209 to 225 (NGARESSQENQDAKEVA).

Seminal fluid.

Its subcellular location is the secreted. Functionally, responsible for physiological and behavioral changes in mated female flies. In Drosophila melanogaster (Fruit fly), this protein is Accessory gland protein Acp32CD (Acp32CD).